The primary structure comprises 463 residues: Glutamate--tRNA ligase 1 (463 aa).

Positions 10 to 20 (PSPTGYLHIGG) match the 'HIGH' region motif. The short motif at 238–242 (KLSKR) is the 'KMSKS' region element. Residue Lys241 participates in ATP binding.

It belongs to the class-I aminoacyl-tRNA synthetase family. Glutamate--tRNA ligase type 1 subfamily. In terms of assembly, monomer.

The protein localises to the cytoplasm. It catalyses the reaction tRNA(Glu) + L-glutamate + ATP = L-glutamyl-tRNA(Glu) + AMP + diphosphate. Functionally, catalyzes the attachment of glutamate to tRNA(Glu) in a two-step reaction: glutamate is first activated by ATP to form Glu-AMP and then transferred to the acceptor end of tRNA(Glu). This Helicobacter pylori (strain P12) protein is Glutamate--tRNA ligase 1.